Here is a 119-residue protein sequence, read N- to C-terminus: Microtubule nucleation factor SSNA1 (119 aa).

Thr-2 bears the N-acetylthreonine mark. An important for localization to the centrosome region spans residues 2 to 32; that stretch reads TQQGAALQNYNNELVKCIEELCQKREELCRQ. Residues 13–70 are a coiled coil; the sequence is NELVKCIEELCQKREELCRQIQQEEDEKQRLQNEVRQLTEKLARVNENLARKIASRNE.

This sequence belongs to the SSNA1 family. Self-associates to form fibrils. Also forms dimers as well as monomers. Interacts with SPAST.

The protein resides in the nucleus. It localises to the cytoplasm. The protein localises to the cytoskeleton. It is found in the microtubule organizing center. Its subcellular location is the centrosome. The protein resides in the centriole. It localises to the midbody. The protein localises to the flagellum basal body. It is found in the flagellum axoneme. Its subcellular location is the cell projection. The protein resides in the axon. Its function is as follows. Microtubule-binding protein which stabilizes dynamic microtubules by slowing growth and shrinkage at both plus and minus ends and serves as a sensor of microtubule damage, protecting microtubules from the microtubule-severing enzyme SPAST. Induces microtubule branching which is mediated by the formation of long SSNA1 fibrils which guide microtubule protofilaments to split apart from the mother microtubule and form daughter microtubules. Plays a role in axon outgrowth and branching. Required for cell division. The protein is Microtubule nucleation factor SSNA1 of Mus musculus (Mouse).